Consider the following 458-residue polypeptide: Ammonium transporter Rh type B (458 aa).

At 1–11 (MTDAATNMRLK) the chain is on the cytoplasmic side. The chain crosses the membrane as a helical span at residues 12–32 (LPITCFILEIILIILFGTLVQ). Over 33-58 (YDYETDAKEWHNTSHQDYENDFYFRY) the chain is Extracellular. Asn44 carries an N-linked (GlcNAc...) asparagine glycan. Residues 59-79 (PSFQDVHVMIFVGFGFLMTFL) form a helical membrane-spanning segment. Topologically, residues 80-83 (QRYG) are cytoplasmic. The helical transmembrane segment at 84-104 (FGSVGFNFLIAAFSLQWATLM) threads the bilayer. Over 105-121 (QGFFHGMHGGKIHIGVE) the chain is Extracellular. The helical transmembrane segment at 122–142 (SMINADFCTGSVLISFGAVLG) threads the bilayer. Residues 143–151 (KTSPIQLLT) lie on the Cytoplasmic side of the membrane. The chain crosses the membrane as a helical span at residues 152–172 (MAIFEVTLFAVNEFILLSLLG). The Extracellular segment spans residues 173–176 (TKDA). Residues 177-197 (GGSMTIHTFGAYFGLMVTRIL) form a helical membrane-spanning segment. Residues 198–216 (YRPNLDKSKHRNSSVYHSD) are Cytoplasmic-facing. A helical transmembrane segment spans residues 217–237 (LFAMIGTVYLWMFWPSFNSAI). At 238-247 (TAHGDDQHRT) the chain is on the extracellular side. The helical transmembrane segment at 248–270 (ALNTYYSLAACTLATYGMSAITS) threads the bilayer. Over 271–274 (HDGK) the chain is Cytoplasmic. Residues 275-295 (LDMVHIQNAALAGGVAVGTAG) traverse the membrane as a helical segment. Residues 296–298 (EMM) are Extracellular-facing. The helical transmembrane segment at 299-319 (LTPFGSMIVGFMAGIISVLGF) threads the bilayer. The Cytoplasmic segment spans residues 320–340 (KFLSPILEDKLKIQDTCGIHN). Residues 341-361 (LHGMPGVLGAIVGAVTAALAT) form a helical membrane-spanning segment. Over 362-391 (TDVYGQGMADVFPAVADGSVNATKQGGIQA) the chain is Extracellular. Residues 392-412 (LSLAITLGIAVLGGLIVGFVL) traverse the membrane as a helical segment. Residues 413 to 458 (KLPVFGTPPDTLCFEDSVYWEVPGSESPEEGELTSVKPEETEHLNS) are Cytoplasmic-facing. Residues 436–458 (GSESPEEGELTSVKPEETEHLNS) form a disordered region. Basic and acidic residues predominate over residues 449 to 458 (KPEETEHLNS).

It belongs to the ammonium transporter (TC 2.A.49) family. Rh subfamily. Specifically expressed in the gill by pavement cells (at protein level).

Its subcellular location is the apicolateral cell membrane. The protein resides in the cytoplasmic vesicle membrane. Functions as an ammonia transporter. May play a role in the elimination of ammonia in the gill. The sequence is that of Ammonium transporter Rh type B (rhbg) from Takifugu rubripes (Japanese pufferfish).